We begin with the raw amino-acid sequence, 78 residues long: Acyl carrier protein (78 aa).

Residues 2–77 (SDIEQRVKKI…QAIDYVNANL (76 aa)) form the Carrier domain. At Ser-37 the chain carries O-(pantetheine 4'-phosphoryl)serine.

This sequence belongs to the acyl carrier protein (ACP) family. In terms of processing, 4'-phosphopantetheine is transferred from CoA to a specific serine of apo-ACP by AcpS. This modification is essential for activity because fatty acids are bound in thioester linkage to the sulfhydryl of the prosthetic group.

It localises to the cytoplasm. It participates in lipid metabolism; fatty acid biosynthesis. Carrier of the growing fatty acid chain in fatty acid biosynthesis. The polypeptide is Acyl carrier protein (Methylobacillus flagellatus (strain ATCC 51484 / DSM 6875 / VKM B-1610 / KT)).